A 420-amino-acid chain; its full sequence is Putative RNA-binding protein Alsin2 (420 aa).

A coiled-coil region spans residues 99-130 (IADCDRRTDSAKQRLKETQEELTAEVAEKANA). Basic and acidic residues-rich tracts occupy residues 242–259 (AELK…EGRG), 282–363 (RERQ…RFGD), and 373–399 (HHRD…HFRD). The segment at 242-420 (AELKRTGKMT…SYSRERNYRR (179 aa)) is disordered.

This sequence belongs to the Luc7 family. In terms of assembly, interacts with x16 (via Arg/Ser-rich region).

In terms of biological role, may bind to RNA via its Arg/Ser-rich domain. The sequence is that of Putative RNA-binding protein Alsin2 from Drosophila melanogaster (Fruit fly).